The sequence spans 837 residues: MMSASRLAGTLIPAMAFLSCVRPESWEPCVVPNITYQCMELNFYKIPDNLPFSTKNLDLSFNPLRHLGSYSFFSFPELQVLDLSRCEIQTIEDGAYQSLSHLSTLILTGNPIQSLALGAFSGLSSLQKLVAVETNLASLENFPIGHLKTLKELNVAHNLIQSFKLPEYFSNLTNLEYLDLSSNKIQSIYCTDLRVLHQMPLLNLSLDLSLNPMTFIQPGAFKEIRLHKLTLRNNFDSLNVMKTCIQGLAGLEVRRLVLGEFRNEGNLEKFDKSALEGLCNLTIEEFRLAYLDYYLDDIIDLFNCLTNVSSFSLVSVTIERVKDFSYNFGWQHLELVNCKFGQFPTLKLKSLKRLTFTSNKGGNAFSEVDLPSLEFLDLSRNGLSFKGCCSQSDFGTTSLKYLDLSFNGVITMSSNFLGLEQLEHLDFQHSNLKQMSEFSVFLSLRNLIYLDISHTHTRVAFNGIFNGLSSLEVLKMAGNSFQENFLPDIFTELRNLTFLDLSQCQLEQLSPTAFNSLSSLQVLNMSHNNFFSLDTFPYKCLNSLRVLDYSLNHIMTSKKQELQHFPSSLAFLNLTQNDFACTCEHQSFLQWIKDQRQLLVEVERMECATPSDKQGMPVLSLNITCQMNKTIIGVSVLSVLVVSVVAVLVYKFYFHLMLLAGCIKYGRGENVYDAFVIYSSQDEDWVRNELVKNLEEGVPPFQLCLHYRDFIPGVAIAANIIHEGFHKSRKVIVVVSQHFIQSRWCIFEYEIAQTWQFLSSRAGIIFIVLQKVEKTLLRQQVELYRLLSRNTYLEWEDSVLGRHIFWRRLRKALLDGKSWNPEGTVGTGCNWQEATSI.

The first 23 residues, 1–23 (MMSASRLAGTLIPAMAFLSCVRP), serve as a signal peptide directing secretion. The Extracellular segment spans residues 24–629 (ESWEPCVVPN…SLNITCQMNK (606 aa)). C29 and C38 are oxidised to a cystine. N33 carries an N-linked (GlcNAc...) asparagine glycan. LRR repeat units lie at residues 53–74 (STKN…SFFS), 77–98 (ELQV…AYQS), 101–122 (HLST…AFSG), 125–146 (SLQK…PIGH), and 149–170 (TLKE…EYFS). N171 is a glycosylation site (N-linked (GlcNAc...) asparagine). LRR repeat units lie at residues 174–197 (NLEY…RVLH), 203–223 (NLSL…AFKE), and 225–245 (RLHK…KTCI). N203 carries an N-linked (GlcNAc...) asparagine glycan. The cysteines at positions 279 and 304 are disulfide-linked. Residues N280 and N307 are each glycosylated (N-linked (GlcNAc...) asparagine). 10 LRR repeats span residues 329–349 (GWQH…LKLK), 350–371 (SLKR…VDLP), 372–392 (SLEF…CSQS), 398–420 (SLKY…LGLE), 421–442 (QLEH…SVFL), 446–454 (NLIYLDISH), 470–493 (SLEV…FTEL), 495–516 (NLTF…AFNS), 519–540 (SLQV…PYKC), and 543–563 (SLRV…QELQ). The cysteines at positions 388 and 389 are disulfide-linked. N495 and N524 each carry an N-linked (GlcNAc...) asparagine glycan. A glycan (N-linked (GlcNAc...) asparagine) is linked at N573. Residues 577 to 627 (NDFACTCEHQSFLQWIKDQRQLLVEVERMECATPSDKQGMPVLSLNITCQM) form the LRRCT domain. 2 cysteine pairs are disulfide-bonded: C581/C607 and C583/C625. Residues N622 and N628 are each glycosylated (N-linked (GlcNAc...) asparagine). Residues 630–650 (TIIGVSVLSVLVVSVVAVLVY) traverse the membrane as a helical segment. At 651–837 (KFYFHLMLLA…GCNWQEATSI (187 aa)) the chain is on the cytoplasmic side. Residues 670-813 (NVYDAFVIYS…IFWRRLRKAL (144 aa)) form the TIR domain.

The protein belongs to the Toll-like receptor family. Belongs to the lipopolysaccharide (LPS) receptor, a multi-protein complex containing at least CD14, LY96 and TLR4. Binding to bacterial LPS leads to homodimerization. Interacts with LY96 via the extracellular domain. Interacts with MYD88 and TIRAP via their respective TIR domains. Interacts with TICAM2. Interacts with NOX4. Interacts with CNPY3 and HSP90B1; this interaction is required for proper folding in the endoplasmic reticulum. Interacts with MAP3K21; this interaction leads to negative regulation of TLR4 signaling. Interacts with CD36, following CD36 stimulation by oxLDL or amyloid-beta 42, and forms a heterodimer with TLR6. The trimeric complex is internalized and triggers inflammatory response. LYN kinase activity facilitates TLR4-TLR6 heterodimerization and signal initiation. Interacts with TICAM1 in response to LPS in a WDFY1-dependent manner. Interacts with WDFY1 in response to LPS. Interacts with SMPDL3B. Interacts with CEACAM1; upon lipopolysaccharide stimulation, forms a complex including TLR4 and the phosphorylated form of SYK and CEACAM1, which in turn, recruits PTPN6 that dephosphorylates SYK, reducing the production of reactive oxygen species (ROS) and lysosome disruption, which in turn, reduces the activity of the inflammasome. Interacts with RFTN1; the interaction occurs in response to lipopolysaccharide stimulation. Interacts with SCIMP; the interaction occurs in response to lipopolysaccharide stimulation and is enhanced by phosphorylation of SCIMP by LYN. This interaction facilitates the phosphorylation of TLR4 by LYN which elicits a selective cytokine response in macrophages. Interacts with TRAF3IP3. Interacts with TREM1; this interaction enhances TLR4-mediated inflammatory response. Interacts with ZG16B/PAUF. Interacts with CD82; this interaction inhibits TLR4-mediated signaling pathway. Phosphorylated on tyrosine residues by LYN after binding lipopolysaccharide. In terms of processing, ubiquitinated by RNF128 via 'Lys-28'-linked polyubiquitin chains, leading to proteasomal degradation.

It localises to the cell membrane. Its subcellular location is the early endosome. It is found in the cell projection. The protein localises to the ruffle. Transmembrane receptor that functions as a pattern recognition receptor recognizing pathogen- and damage-associated molecular patterns (PAMPs and DAMPs) to induce innate immune responses via downstream signaling pathways. At the plasma membrane, cooperates with LY96 to mediate the innate immune response to bacterial lipopolysaccharide (LPS). Also involved in LPS-independent inflammatory responses triggered by free fatty acids, such as palmitate, and Ni(2+). Mechanistically, acts via MYD88, TIRAP and TRAF6, leading to NF-kappa-B activation, cytokine secretion and the inflammatory response. Alternatively, CD14-mediated TLR4 internalization via endocytosis is associated with the initiation of a MYD88-independent signaling via the TICAM1-TBK1-IRF3 axis leading to type I interferon production. In addition to the secretion of proinflammatory cytokines, initiates the activation of NLRP3 inflammasome and formation of a positive feedback loop between autophagy and NF-kappa-B signaling cascade. In complex with TLR6, promotes inflammation in monocytes/macrophages by associating with TLR6 and the receptor CD86. Upon ligand binding, such as oxLDL or amyloid-beta 42, the TLR4:TLR6 complex is internalized and triggers inflammatory response, leading to NF-kappa-B-dependent production of CXCL1, CXCL2 and CCL9 cytokines, via MYD88 signaling pathway, and CCL5 cytokine, via TICAM1 signaling pathway. In myeloid dendritic cells, vesicular stomatitis virus glycoprotein G but not LPS promotes the activation of IRF7, leading to type I IFN production in a CD14-dependent manner. The protein is Toll-like receptor 4 (TLR4) of Gorilla gorilla gorilla (Western lowland gorilla).